A 1626-amino-acid chain; its full sequence is Collagen alpha-1(XXII) chain (1626 aa).

The signal sequence occupies residues Met-1 to Ala-27. Residues Asp-38–Leu-213 enclose the VWFA domain. One can recognise a Laminin G-like domain in the interval Gly-239–Ser-427. An N-linked (GlcNAc...) asparagine glycan is attached at Asn-375. 16 consecutive Collagen-like domains span residues Gly-481 to Gly-520, Gln-526 to Val-565, Gly-566 to Ser-625, Gly-657 to Gly-708, Gly-714 to Arg-773, Gly-774 to Lys-833, Gly-868 to Gly-922, Gly-925 to Gly-984, Ala-1047 to Pro-1095, Pro-1118 to Pro-1155, Gly-1156 to Pro-1215, Gly-1249 to Asp-1308, Gly-1315 to Lys-1374, Gly-1387 to Pro-1446, Ser-1495 to Pro-1550, and Asp-1575 to Gln-1604. 4 disordered regions span residues Pro-506–Gly-1002, Gly-1019–Pro-1103, Pro-1119–Ser-1458, and Tyr-1491–Gln-1609. Positions Asp-544 to Pro-553 are enriched in basic and acidic residues. Pro residues predominate over residues Gln-571–Pro-580. The segment covering Glu-591–Leu-606 has biased composition (basic and acidic residues). Over residues Ala-661–Ala-670 the composition is skewed to low complexity. 2 stretches are compositionally biased toward pro residues: residues Pro-715–Gly-728 and Lys-742–Pro-751. Basic and acidic residues-rich tracts occupy residues Glu-769–Leu-778 and Arg-815–Glu-826. Residues Ala-908–Pro-939 are compositionally biased toward low complexity. Over residues Pro-945 to Ala-957 the composition is skewed to basic and acidic residues. Low complexity-rich tracts occupy residues Glu-959 to Ala-974 and Pro-1056 to Arg-1065. 2 stretches are compositionally biased toward basic and acidic residues: residues Lys-1131 to Glu-1151 and Arg-1173 to Gln-1185. Residues Ala-1205–Lys-1223 are compositionally biased toward low complexity. The span at Glu-1241–Lys-1250 shows a compositional bias: basic and acidic residues. A compositionally biased stretch (low complexity) spans Ala-1260–Pro-1275. Over residues Lys-1379–Pro-1389 the composition is skewed to low complexity. A compositionally biased stretch (basic and acidic residues) spans Phe-1391 to Lys-1404. Positions Gly-1405–Gly-1414 are enriched in gly residues. Residues Val-1440–Pro-1449 are compositionally biased toward pro residues. The segment covering Gly-1521–Gly-1530 has biased composition (gly residues). Pro residues predominate over residues Leu-1595–Gln-1604.

Belongs to the fibril-associated collagens with interrupted helices (FACIT) family. Restrictive expression is observed at tissue junctions such as the myotendinous junction in skeletal and heart muscle, the articular cartilage-synovial fluid junction, or the border between the anagen hair follicle and the dermis in the skin. It is deposited in the basement membrane zone of the myotendinous junction and the hair follicle and associated with the extrafibrillar matrix in cartilage.

The protein resides in the secreted. Its subcellular location is the extracellular space. It is found in the extracellular matrix. It localises to the cytoplasm. In terms of biological role, acts as a cell adhesion ligand for skin epithelial cells and fibroblasts. This Homo sapiens (Human) protein is Collagen alpha-1(XXII) chain (COL22A1).